A 112-amino-acid polypeptide reads, in one-letter code: uncharacterized protein (112 aa).

A compositionally biased stretch (polar residues) spans 1 to 11 (MAESVASSESL). The disordered stretch occupies residues 1 to 32 (MAESVASSESLPQMKPEEPESKKSPSREAIPK). The segment covering 15-31 (KPEEPESKKSPSREAIP) has biased composition (basic and acidic residues). Residues 81–101 (VVFIFMIAIMSMLVIGLVVCG) traverse the membrane as a helical segment.

It localises to the membrane. This is an uncharacterized protein from Encephalitozoon cuniculi (strain GB-M1) (Microsporidian parasite).